Here is a 485-residue protein sequence, read N- to C-terminus: ATP-dependent 6-phosphofructokinase (485 aa).

Residues glycine 105, 171-172 (RG), and 196-199 (GDGT) contribute to the ATP site. Aspartate 197 lines the Mg(2+) pocket. Substrate-binding positions include 225–227 (TID), 270–272 (MGR), glutamate 323, and 378–381 (YMIR). Aspartate 227 functions as the Proton acceptor in the catalytic mechanism. Positions 483-485 (SKL) match the Peroxisomal targeting signal motif.

It belongs to the phosphofructokinase type A (PFKA) family. PPi-dependent PFK group II subfamily. Atypical ATP-dependent clade 'X' sub-subfamily. Homotetramer. It depends on Mg(2+) as a cofactor.

The protein localises to the glycosome. It catalyses the reaction beta-D-fructose 6-phosphate + ATP = beta-D-fructose 1,6-bisphosphate + ADP + H(+). Its pathway is carbohydrate degradation; glycolysis; D-glyceraldehyde 3-phosphate and glycerone phosphate from D-glucose: step 3/4. Its activity is regulated as follows. Allosterically activated by AMP. Its function is as follows. Catalyzes the phosphorylation of D-fructose 6-phosphate to fructose 1,6-bisphosphate by ATP, the first committing step of glycolysis. The polypeptide is ATP-dependent 6-phosphofructokinase (Trypanosoma cruzi (strain CL Brener)).